The following is a 503-amino-acid chain: GTPase Obg (503 aa).

The 158-residue stretch at 2-159 folds into the Obg domain; sequence PQFVDRVVLH…KDVILELKSM (158 aa). The region spanning 160-340 is the OBG-type G domain; sequence ADVGLVGFPS…LKYALMDIVK (181 aa). Residues 166 to 173, 191 to 195, 212 to 215, 292 to 295, and 321 to 323 contribute to the GTP site; these read GFPSAGKS, FTTLV, DVPG, NKMD, and STV. Mg(2+) contacts are provided by serine 173 and threonine 193. Positions 371-444 constitute an OCT domain; the sequence is EFEVEADPSA…IGEITFEWDP (74 aa). The segment covering 457-476 has biased composition (basic and acidic residues); that stretch reads RGTDVRLEQNTRATPEERKR. Residues 457–503 are disordered; the sequence is RGTDVRLEQNTRATPEERKRASQARRGLIDENDFGDGEVAERERWQG.

The protein belongs to the TRAFAC class OBG-HflX-like GTPase superfamily. OBG GTPase family. In terms of assembly, monomer. Requires Mg(2+) as cofactor.

The protein localises to the cytoplasm. In terms of biological role, an essential GTPase which binds GTP, GDP and possibly (p)ppGpp with moderate affinity, with high nucleotide exchange rates and a fairly low GTP hydrolysis rate. Plays a role in control of the cell cycle, stress response, ribosome biogenesis and in those bacteria that undergo differentiation, in morphogenesis control. The chain is GTPase Obg from Corynebacterium jeikeium (strain K411).